Reading from the N-terminus, the 531-residue chain is SWI/SNF-related matrix-associated actin-dependent regulator of chromatin subfamily D member 2 (531 aa).

2 positions are modified to asymmetric dimethylarginine: Arg81 and Arg104. Ser203 is modified (phosphoserine). A disordered region spans residues 205-226 (SKAEGDSAGTAGTPGGTPAGDK). Residue Thr217 is modified to Phosphothreonine. A Glycyl lysine isopeptide (Lys-Gly) (interchain with G-Cter in SUMO2) cross-link involves residue Lys226. The region spanning 306–383 (HQPPQYKLDP…PMKLAGLLQH (78 aa)) is the SWIB/MDM2 domain.

It belongs to the SMARCD family. Component of the multiprotein chromatin-remodeling complexes SWI/SNF: SWI/SNF-A (BAF), SWI/SNF-B (PBAF) and related complexes. The canonical complex contains a catalytic subunit (either SMARCA4/BRG1/BAF190A or SMARCA2/BRM/BAF190B), and at least SMARCE1, ACTL6A/BAF53, SMARCC1/BAF155, SMARCC2/BAF170, and SMARCB1/SNF5/BAF47. Other subunits specific to each of the complexes may also be present permitting several possible combinations developmentally and tissue specific. Component of the BAF complex, which includes at least actin (ACTB), ARID1A/BAF250A, ARID1B/BAF250B, SMARCA2/BRM, SMARCA4/BRG1, ACTL6A/BAF53, ACTL6B/BAF53B, SMARCE1/BAF57, SMARCC1/BAF155, SMARCC2/BAF170, SMARCB1/SNF5/INI1, and one or more SMARCD1/BAF60A, SMARCD2/BAF60B, or SMARCD3/BAF60C. In muscle cells, the BAF complex also contains DPF3. Component of the SWI/SNF-B (PBAF) chromatin remodeling complex, at least composed of SMARCA4/BRG1, SMARCB1/BAF47/SNF5, ACTL6A/BAF53A or ACTL6B/BAF53B, SMARCE1/BAF57, SMARCD1/BAF60A, SMARCD2/BAF60B, perhaps SMARCD3/BAF60C, SMARCC1/BAF155, SMARCC2/BAF170, PBRM1/BAF180, ARID2/BAF200 and actin (ACTB). Interacts with UNKL. Interacts with CEBPE. Post-translationally, ubiquitinated through a signaling process involving RAC1 and the RING finger protein UNKL. Isoform 2 is expressed in the pancreas.

It is found in the nucleus. Involved in transcriptional activation and repression of select genes by chromatin remodeling (alteration of DNA-nucleosome topology). Component of SWI/SNF chromatin remodeling complexes that carry out key enzymatic activities, changing chromatin structure by altering DNA-histone contacts within a nucleosome in an ATP-dependent manner. Critical regulator of myeloid differentiation, controlling granulocytopoiesis and the expression of genes involved in neutrophil granule formation. This Homo sapiens (Human) protein is SWI/SNF-related matrix-associated actin-dependent regulator of chromatin subfamily D member 2 (SMARCD2).